A 597-amino-acid polypeptide reads, in one-letter code: 2-isopropylmalate synthase (597 aa).

The tract at residues 1-80 (MQLDIDRLVA…QKNESLERTE (80 aa)) is unknown. The region spanning 87-349 (VIIFDTTLRD…ETGIDTTQIV (263 aa)) is the Pyruvate carboxyltransferase domain. The 2-isopropylmalate synthase stretch occupies residues 87 to 349 (VIIFDTTLRD…ETGIDTTQIV (263 aa)). The Mn(2+) site is built by aspartate 96, histidine 284, histidine 286, and asparagine 320. The segment at 475–597 (KFISQKISTE…KPKAQGSGTI (123 aa)) is regulatory domain.

It belongs to the alpha-IPM synthase/homocitrate synthase family. LeuA type 1 subfamily. In terms of assembly, homodimer. Mn(2+) is required as a cofactor.

The protein localises to the cytoplasm. It carries out the reaction 3-methyl-2-oxobutanoate + acetyl-CoA + H2O = (2S)-2-isopropylmalate + CoA + H(+). It functions in the pathway amino-acid biosynthesis; L-leucine biosynthesis; L-leucine from 3-methyl-2-oxobutanoate: step 1/4. Functionally, catalyzes the condensation of the acetyl group of acetyl-CoA with 3-methyl-2-oxobutanoate (2-ketoisovalerate) to form 3-carboxy-3-hydroxy-4-methylpentanoate (2-isopropylmalate). This is 2-isopropylmalate synthase from Neisseria gonorrhoeae (strain ATCC 700825 / FA 1090).